Consider the following 357-residue polypeptide: Dynein axonemal assembly factor 10 (357 aa).

4 WD repeats span residues 80–127 (EFTN…IPIW), 132–170 (AHQGSISAIDAYADNLVVCGGKDGTIKVYDTRIKPNSAN), 184–223 (EQTNKSNCWSICTNDNNIIAGFENGDLNIYNLKTNSIQST), and 277–321 (EPNQ…IDKV).

As to quaternary structure, interacts with PIH1D1; the interaction associates DNAAF10 with the R2TP complex. Interacts with several dynein axonemal assembly factors.

Its subcellular location is the dynein axonemal particle. Functionally, key assembly factor specifically required for the stability of axonemal dynein heavy chains in cytoplasm. The chain is Dynein axonemal assembly factor 10 (dnaaf10) from Dictyostelium discoideum (Social amoeba).